A 156-amino-acid chain; its full sequence is uncharacterized protein (156 aa).

This is an uncharacterized protein from Saccharomyces cerevisiae (strain ATCC 204508 / S288c) (Baker's yeast).